A 63-amino-acid polypeptide reads, in one-letter code: ATP synthase F(0) complex subunit 8 (63 aa).

Residues Met-8 to Phe-24 form a helical membrane-spanning segment. Lys-57 bears the N6-acetyllysine mark.

The protein belongs to the ATPase protein 8 family. In terms of assembly, component of the ATP synthase complex composed at least of ATP5F1A/subunit alpha, ATP5F1B/subunit beta, ATP5MC1/subunit c (homooctomer), MT-ATP6/subunit a, MT-ATP8/subunit 8, ATP5ME/subunit e, ATP5MF/subunit f, ATP5MG/subunit g, ATP5MK/subunit k, ATP5MJ/subunit j, ATP5F1C/subunit gamma, ATP5F1D/subunit delta, ATP5F1E/subunit epsilon, ATP5PF/subunit F6, ATP5PB/subunit b, ATP5PD/subunit d, ATP5PO/subunit OSCP. ATP synthase complex consists of a soluble F(1) head domain (subunits alpha(3) and beta(3)) - the catalytic core - and a membrane F(0) domain - the membrane proton channel (subunits c, a, 8, e, f, g, k and j). These two domains are linked by a central stalk (subunits gamma, delta, and epsilon) rotating inside the F1 region and a stationary peripheral stalk (subunits F6, b, d, and OSCP). Interacts with PRICKLE3.

It localises to the mitochondrion membrane. Its function is as follows. Subunit 8, of the mitochondrial membrane ATP synthase complex (F(1)F(0) ATP synthase or Complex V) that produces ATP from ADP in the presence of a proton gradient across the membrane which is generated by electron transport complexes of the respiratory chain. ATP synthase complex consist of a soluble F(1) head domain - the catalytic core - and a membrane F(1) domain - the membrane proton channel. These two domains are linked by a central stalk rotating inside the F(1) region and a stationary peripheral stalk. During catalysis, ATP synthesis in the catalytic domain of F(1) is coupled via a rotary mechanism of the central stalk subunits to proton translocation. In vivo, can only synthesize ATP although its ATP hydrolase activity can be activated artificially in vitro. Part of the complex F(0) domain. This is ATP synthase F(0) complex subunit 8 from Balaenoptera physalus (Fin whale).